The following is a 77-amino-acid chain: Small ribosomal subunit protein bS20 (77 aa).

It belongs to the bacterial ribosomal protein bS20 family.

Binds directly to 16S ribosomal RNA. This Streptococcus agalactiae serotype Ia (strain ATCC 27591 / A909 / CDC SS700) protein is Small ribosomal subunit protein bS20.